A 306-amino-acid polypeptide reads, in one-letter code: 4-diphosphocytidyl-2-C-methyl-D-erythritol kinase (306 aa).

Lys-11 is an active-site residue. 113–123 provides a ligand contact to ATP; the sequence is PPEGGIGGGSS. The active site involves Asp-153.

Belongs to the GHMP kinase family. IspE subfamily.

It catalyses the reaction 4-CDP-2-C-methyl-D-erythritol + ATP = 4-CDP-2-C-methyl-D-erythritol 2-phosphate + ADP + H(+). Its pathway is isoprenoid biosynthesis; isopentenyl diphosphate biosynthesis via DXP pathway; isopentenyl diphosphate from 1-deoxy-D-xylulose 5-phosphate: step 3/6. Catalyzes the phosphorylation of the position 2 hydroxy group of 4-diphosphocytidyl-2C-methyl-D-erythritol. The polypeptide is 4-diphosphocytidyl-2-C-methyl-D-erythritol kinase (Leptospira biflexa serovar Patoc (strain Patoc 1 / ATCC 23582 / Paris)).